A 270-amino-acid chain; its full sequence is L-cystine-binding protein TcyK (270 aa).

The N-terminal stretch at 1-20 (MKTKTAFMAILFSLITVLSA) is a signal peptide. The N-palmitoyl cysteine moiety is linked to residue cysteine 21. A lipid anchor (S-diacylglycerol cysteine) is attached at cysteine 21.

The protein belongs to the bacterial solute-binding protein 3 family. The complex is composed of two ATP-binding proteins (TcyN), two transmembrane proteins (TcyL and TcyM) and two solute-binding proteins (TcyJ and TcyK).

It localises to the cell membrane. Its function is as follows. Part of the ABC transporter complex TcyJKLMN involved in L-cystine import. Is also involved in cystathionine, djenkolate, and S-methylcysteine transport. The sequence is that of L-cystine-binding protein TcyK (tcyK) from Bacillus subtilis (strain 168).